The primary structure comprises 567 residues: Diacylglycerol kinase epsilon (567 aa).

The chain crosses the membrane as a helical span at residues 22 to 42; sequence LILWTLCSVLLPVFITFWCSL. 2 Phorbol-ester/DAG-type zinc fingers span residues 59-108 and 124-177; these read KHGW…RFQC and PHHW…NEKC. One can recognise a DAGKc domain in the interval 215-356; sequence KQWTPLIILA…LDRWKVQVTN (142 aa).

It belongs to the eukaryotic diacylglycerol kinase family. Expressed predominantly in testis. Expressed in endothelium, platelets and podocytes (at protein level).

The protein resides in the membrane. It is found in the cytoplasm. It catalyses the reaction a 1,2-diacyl-sn-glycerol + ATP = a 1,2-diacyl-sn-glycero-3-phosphate + ADP + H(+). The enzyme catalyses 1-hexadecanoyl-2-(5Z,8Z,11Z,14Z-eicosatetraenoyl)-sn-glycerol + ATP = 1-hexadecanoyl-2-(5Z,8Z,11Z,14Z-eicosatetraenoyl)-sn-glycero-3-phosphate + ADP + H(+). It carries out the reaction 1-octadecanoyl-2-(5Z,8Z,11Z,14Z-eicosatetraenoyl)-sn-glycerol + ATP = 1-octadecanoyl-2-(5Z,8Z,11Z,14Z-eicosatetraenoyl)-sn-glycero-3-phosphate + ADP + H(+). The catalysed reaction is 1-eicosanoyl-2-(5Z,8Z,11Z,14Z)-eicosatetraenoyl-sn-glycerol + ATP = 1-eicosanoyl-2-(5Z,8Z,11Z,14Z)-eicosatetraenoyl-sn-glycero-3-phosphate + ADP + H(+). It catalyses the reaction 1,2-di-(5Z,8Z,11Z,14Z)-eicosatetraenoyl-sn-glycerol + ATP = 1,2-di-(5Z,8Z,11Z,14Z)-eicosatetraenoyl-sn-glycero-3-phosphate + ADP + H(+). The enzyme catalyses 1-octadecanoyl-2-(9Z,12Z)-octadecadienoyl-sn-glycerol + ATP = 1-octadecanoyl-2-(9Z,12Z-octadecadienoyl)-sn-glycero-3-phosphate + ADP + H(+). It carries out the reaction 1,2-di-(9Z,12Z-octadecadienoyl)-sn-glycerol + ATP = 1,2-di-(9Z,12Z-octadecadienoyl)-sn-glycero-3-phosphate + ADP + H(+). The catalysed reaction is 1,2-di-(9Z-octadecenoyl)-sn-glycerol + ATP = 1,2-di-(9Z-octadecenoyl)-sn-glycero-3-phosphate + ADP + H(+). It participates in lipid metabolism; glycerolipid metabolism. With respect to regulation, undergoes competitive inhibition by its own product 1,2-diacyl-sn-glycero-3-phosphate/phosphatidic acid. The strongest inhibition being observed in vitro with 1-octadecanoyl-2-(5Z,8Z,11Z,14Z-eicosatetraenoyl)-sn-glycero-3-phosphate, a major intermediate in the phosphatidylinositol turnover cycle and more generally by diacylglycerols with an arachidonoyl acyl chain at the sn-2 position. In terms of biological role, membrane-bound diacylglycerol kinase that converts diacylglycerol/DAG into phosphatidic acid/phosphatidate/PA and regulates the respective levels of these two bioactive lipids. Thereby, acts as a central switch between the signaling pathways activated by these second messengers with different cellular targets and opposite effects in numerous biological processes. Also plays an important role in the biosynthesis of complex lipids. Displays specificity for diacylglycerol substrates with an arachidonoyl acyl chain at the sn-2 position, with the highest activity toward 1-octadecanoyl-2-(5Z,8Z,11Z,14Z-eicosatetraenoyl)-sn-glycerol the main diacylglycerol intermediate within the phosphatidylinositol turnover cycle. Can also phosphorylate diacylglycerol substrates with a linoleoyl acyl chain at the sn-2 position but much less efficiently. The chain is Diacylglycerol kinase epsilon (DGKE) from Homo sapiens (Human).